The chain runs to 259 residues: Methionine aminopeptidase (259 aa).

His78 contributes to the substrate binding site. A divalent metal cation is bound by residues Asp95, Asp106, and His169. A substrate-binding site is contributed by His176. Residue Glu202 participates in a divalent metal cation binding. A substrate-binding site is contributed by Trp220. Glu234 contacts a divalent metal cation.

Belongs to the peptidase M24A family. Methionine aminopeptidase type 1 subfamily. Monomer. Co(2+) serves as cofactor. Zn(2+) is required as a cofactor. The cofactor is Mn(2+). It depends on Fe(2+) as a cofactor.

It carries out the reaction Release of N-terminal amino acids, preferentially methionine, from peptides and arylamides.. Functionally, removes the N-terminal methionine from nascent proteins. The N-terminal methionine is often cleaved when the second residue in the primary sequence is small and uncharged (Met-Ala-, Cys, Gly, Pro, Ser, Thr, or Val). Requires deformylation of the N(alpha)-formylated initiator methionine before it can be hydrolyzed. This is Methionine aminopeptidase from Rickettsia prowazekii (strain Madrid E).